The primary structure comprises 117 residues: Transcription elongation factor SPT4 (117 aa).

Alanine 2 is modified (N-acetylalanine). The segment at 2–40 (ALETVPKDLRHLRACLLCSLVKTIDQFEYDGCDNCDAYL) is interaction with SUPT5H. Cysteine 16, cysteine 19, cysteine 33, and cysteine 36 together coordinate Zn(2+). Residues 16 to 36 (CLLCSLVKTIDQFEYDGCDNC) form a C4-type zinc finger.

The protein belongs to the SPT4 family. Interacts with SUPT5H to form DSIF. DSIF interacts with the positive transcription elongation factor b complex (P-TEFb complex), which is composed of CDK9 and cyclin-T (CCNT1 or CCNT2). DSIF interacts with RNA polymerase II, and this interaction is reduced by phosphorylation of the C-terminal domain (CTD) of POLR2A by P-TEFb. DSIF also interacts with the NELF complex, which is composed of NELFA, NELFB, NELFD and NELFE, and this interaction occurs following prior binding of DSIF to RNA polymerase II. DSIF also interacts with PRMT1/HRMT1L2, TATSF1, RNGTT/CAP1A, PRMT5/SKB1, SUPT6H, and can interact with PIN1. Post-translationally, ubiquitinated by UBR5 when not assembled in the DSIF complex, leading to its degradation: UBR5 recognizes and binds a degron that is not accessible when SUPT4H1 is part of the DSIF complex.

The protein resides in the nucleus. Its function is as follows. Component of the DRB sensitivity-inducing factor complex (DSIF complex), which regulates mRNA processing and transcription elongation by RNA polymerase II. DSIF positively regulates mRNA capping by stimulating the mRNA guanylyltransferase activity of RNGTT/CAP1A. DSIF also acts cooperatively with the negative elongation factor complex (NELF complex) to enhance transcriptional pausing at sites proximal to the promoter. Transcriptional pausing may facilitate the assembly of an elongation competent RNA polymerase II complex. DSIF and NELF promote pausing by inhibition of the transcription elongation factor TFIIS/S-II. TFIIS/S-II binds to RNA polymerase II at transcription pause sites and stimulates the weak intrinsic nuclease activity of the enzyme. Cleavage of blocked transcripts by RNA polymerase II promotes the resumption of transcription from the new 3' terminus and may allow repeated attempts at transcription through natural pause sites. This is Transcription elongation factor SPT4 (SUPT4H1) from Pongo abelii (Sumatran orangutan).